The primary structure comprises 537 residues: Cytochrome P450 86A8 (537 aa).

A helical membrane pass occupies residues 3–23; it reads ISTALMILSAITAYFLWLTFI. Heme is bound at residue Cys458.

Belongs to the cytochrome P450 family. Heme is required as a cofactor. In terms of tissue distribution, expressed in leaves, stems, flowers and siliques. Expressed at low levels in roots.

The protein localises to the membrane. It catalyses the reaction an organic molecule + reduced [NADPH--hemoprotein reductase] + O2 = an alcohol + oxidized [NADPH--hemoprotein reductase] + H2O + H(+). Catalyzes the omega-hydroxylation of various fatty acids (FA). Acts on saturated and unsaturated fatty acids with chain lengths from C12 to C18. May be involved in the biosynthesis of cutin in the epidermis which prevents post-genital organ fusions. Hydroxylated FAs may be important for trichome differentiation, establishment of apical dominance and senescence. This Arabidopsis thaliana (Mouse-ear cress) protein is Cytochrome P450 86A8 (CYP86A8).